Consider the following 75-residue polypeptide: Small ribosomal subunit protein bS18 (75 aa).

Belongs to the bacterial ribosomal protein bS18 family. In terms of assembly, part of the 30S ribosomal subunit. Forms a tight heterodimer with protein bS6.

In terms of biological role, binds as a heterodimer with protein bS6 to the central domain of the 16S rRNA, where it helps stabilize the platform of the 30S subunit. The protein is Small ribosomal subunit protein bS18 of Saccharophagus degradans (strain 2-40 / ATCC 43961 / DSM 17024).